The chain runs to 1194 residues: DNA polymerase catalytic subunit (1194 aa).

Belongs to the DNA polymerase type-B family. Forms a complex with the ssDNA-binding protein, the DNA polymerase processivity factor, and the alkaline exonuclease. Interacts with the helicase-primase complex composed of the primase, the helicase and the primase-associated factor; this interaction may coordinate leading and lagging strand DNA synthesis at the replication fork.

The protein localises to the host nucleus. It catalyses the reaction DNA(n) + a 2'-deoxyribonucleoside 5'-triphosphate = DNA(n+1) + diphosphate. The enzyme catalyses Endonucleolytic cleavage to 5'-phosphomonoester.. In terms of biological role, replicates viral genomic DNA. The replication complex is composed of six viral proteins: the DNA polymerase, processivity factor, primase, primase-associated factor, helicase, and ssDNA-binding protein. Additionally, the polymerase contains an intrinsic ribonuclease H (RNase H) activity that specifically degrades RNA/DNA heteroduplexes or duplex DNA substrates in the 5' to 3' direction. Therefore, it can catalyze the excision of the RNA primers that initiate the synthesis of Okazaki fragments at a replication fork during viral DNA replication. In Varicella-zoster virus (strain Oka vaccine) (HHV-3), this protein is DNA polymerase catalytic subunit.